The chain runs to 404 residues: S-adenosylmethionine synthase (404 aa).

ATP is bound at residue 139-144 (GKGSTD).

Belongs to the AdoMet synthase 2 family. Requires Mg(2+) as cofactor.

The enzyme catalyses L-methionine + ATP + H2O = S-adenosyl-L-methionine + phosphate + diphosphate. Its pathway is amino-acid biosynthesis; S-adenosyl-L-methionine biosynthesis; S-adenosyl-L-methionine from L-methionine: step 1/1. In terms of biological role, catalyzes the formation of S-adenosylmethionine from methionine and ATP. This is S-adenosylmethionine synthase from Saccharolobus islandicus (strain Y.N.15.51 / Yellowstone #2) (Sulfolobus islandicus).